We begin with the raw amino-acid sequence, 449 residues long: Kynurenine 3-monooxygenase (449 aa).

This sequence belongs to the aromatic-ring hydroxylase family. KMO subfamily. FAD serves as cofactor.

It carries out the reaction L-kynurenine + NADPH + O2 + H(+) = 3-hydroxy-L-kynurenine + NADP(+) + H2O. Its pathway is cofactor biosynthesis; NAD(+) biosynthesis; quinolinate from L-kynurenine: step 1/3. In terms of biological role, catalyzes the hydroxylation of L-kynurenine (L-Kyn) to form 3-hydroxy-L-kynurenine (L-3OHKyn). Required for synthesis of quinolinic acid. In Legionella pneumophila (strain Corby), this protein is Kynurenine 3-monooxygenase.